We begin with the raw amino-acid sequence, 508 residues long: Photosystem II CP47 reaction center protein (508 aa).

6 consecutive transmembrane segments (helical) span residues 21-36 (SVHI…WAGS), 101-115 (IVFS…IWHW), 140-156 (GIHL…FGAF), 203-218 (IAAG…FHLS), 237-252 (VLSS…AFVV), and 457-472 (SFAL…HGAR).

This sequence belongs to the PsbB/PsbC family. PsbB subfamily. As to quaternary structure, PSII is composed of 1 copy each of membrane proteins PsbA, PsbB, PsbC, PsbD, PsbE, PsbF, PsbH, PsbI, PsbJ, PsbK, PsbL, PsbM, PsbT, PsbX, PsbY, PsbZ, Psb30/Ycf12, at least 3 peripheral proteins of the oxygen-evolving complex and a large number of cofactors. It forms dimeric complexes. Requires Binds multiple chlorophylls. PSII binds additional chlorophylls, carotenoids and specific lipids. as cofactor.

Its subcellular location is the plastid. It localises to the chloroplast thylakoid membrane. Functionally, one of the components of the core complex of photosystem II (PSII). It binds chlorophyll and helps catalyze the primary light-induced photochemical processes of PSII. PSII is a light-driven water:plastoquinone oxidoreductase, using light energy to abstract electrons from H(2)O, generating O(2) and a proton gradient subsequently used for ATP formation. The protein is Photosystem II CP47 reaction center protein of Platanus occidentalis (Sycamore).